The sequence spans 147 residues: MITLIGEKLARKGSMFLFCGPAEKCRDCRFQPTCIAPLEEGRVYHINEVKDRYQRCPIHLGERVRVVDVEKANIEVLIDSKRAFEGSVISFEFPDCDVECSMRDLCFPEGVMEGDRCRIVKNLGKPGKQCPAGNELRRVLLRPLDKK.

This sequence belongs to the UPF0179 family.

The polypeptide is UPF0179 protein MTH_609 (Methanothermobacter thermautotrophicus (strain ATCC 29096 / DSM 1053 / JCM 10044 / NBRC 100330 / Delta H) (Methanobacterium thermoautotrophicum)).